Here is a 492-residue protein sequence, read N- to C-terminus: Stage IV sporulation protein A (492 aa).

The Walker A motif; involved in ATP-binding motif lies at 24–31 (GAVRTGKS). Residue 24 to 31 (GAVRTGKS) participates in ATP binding.

The protein localises to the cytoplasm. The catalysed reaction is ATP + H2O = ADP + phosphate + H(+). Its function is as follows. ATPase. Has a role at an early stage in the morphogenesis of the spore coat outer layers. Directs the assembly of the coat and exosporium to an area around the forespore. The chain is Stage IV sporulation protein A from Bacillus anthracis.